The primary structure comprises 149 residues: uncharacterized protein (149 aa).

This is an uncharacterized protein from Methanocaldococcus jannaschii (strain ATCC 43067 / DSM 2661 / JAL-1 / JCM 10045 / NBRC 100440) (Methanococcus jannaschii).